The sequence spans 471 residues: 3-isopropylmalate dehydratase large subunit (471 aa).

Residues cysteine 346, cysteine 406, and cysteine 409 each contribute to the [4Fe-4S] cluster site.

This sequence belongs to the aconitase/IPM isomerase family. LeuC type 1 subfamily. Heterodimer of LeuC and LeuD. Requires [4Fe-4S] cluster as cofactor.

It carries out the reaction (2R,3S)-3-isopropylmalate = (2S)-2-isopropylmalate. It participates in amino-acid biosynthesis; L-leucine biosynthesis; L-leucine from 3-methyl-2-oxobutanoate: step 2/4. Its function is as follows. Catalyzes the isomerization between 2-isopropylmalate and 3-isopropylmalate, via the formation of 2-isopropylmaleate. The polypeptide is 3-isopropylmalate dehydratase large subunit (Bacillus pumilus (strain SAFR-032)).